The chain runs to 801 residues: Endonuclease MutS2 (801 aa).

G336–T343 is a binding site for ATP. Residues A696 to T721 are disordered. Residues A701 to K710 are compositionally biased toward basic residues. One can recognise a Smr domain in the interval L726–S801.

This sequence belongs to the DNA mismatch repair MutS family. MutS2 subfamily. As to quaternary structure, homodimer. Binds to stalled ribosomes, contacting rRNA.

Functionally, endonuclease that is involved in the suppression of homologous recombination and thus may have a key role in the control of bacterial genetic diversity. In terms of biological role, acts as a ribosome collision sensor, splitting the ribosome into its 2 subunits. Detects stalled/collided 70S ribosomes which it binds and splits by an ATP-hydrolysis driven conformational change. Acts upstream of the ribosome quality control system (RQC), a ribosome-associated complex that mediates the extraction of incompletely synthesized nascent chains from stalled ribosomes and their subsequent degradation. Probably generates substrates for RQC. The protein is Endonuclease MutS2 of Leuconostoc citreum (strain KM20).